The chain runs to 323 residues: o-succinylbenzoate synthase (323 aa).

Lys-134 acts as the Proton donor in catalysis. The Mg(2+) site is built by Asp-162, Glu-191, and Asp-214. Lys-236 functions as the Proton acceptor in the catalytic mechanism.

Belongs to the mandelate racemase/muconate lactonizing enzyme family. MenC type 1 subfamily. A divalent metal cation is required as a cofactor.

It carries out the reaction (1R,6R)-6-hydroxy-2-succinyl-cyclohexa-2,4-diene-1-carboxylate = 2-succinylbenzoate + H2O. It functions in the pathway quinol/quinone metabolism; 1,4-dihydroxy-2-naphthoate biosynthesis; 1,4-dihydroxy-2-naphthoate from chorismate: step 4/7. The protein operates within quinol/quinone metabolism; menaquinone biosynthesis. Converts 2-succinyl-6-hydroxy-2,4-cyclohexadiene-1-carboxylate (SHCHC) to 2-succinylbenzoate (OSB). The protein is o-succinylbenzoate synthase of Yersinia pseudotuberculosis serotype IB (strain PB1/+).